The following is a 337-amino-acid chain: Glyceraldehyde-3-phosphate dehydrogenase (337 aa).

NAD(+)-binding positions include 12 to 13 (RI), aspartate 34, and arginine 79. D-glyceraldehyde 3-phosphate-binding positions include 150-152 (SCT), threonine 181, 210-211 (TG), and arginine 233. Catalysis depends on cysteine 151, which acts as the Nucleophile. Asparagine 315 provides a ligand contact to NAD(+).

This sequence belongs to the glyceraldehyde-3-phosphate dehydrogenase family. Homotetramer.

It is found in the cytoplasm. The catalysed reaction is D-glyceraldehyde 3-phosphate + phosphate + NAD(+) = (2R)-3-phospho-glyceroyl phosphate + NADH + H(+). Its pathway is carbohydrate degradation; glycolysis; pyruvate from D-glyceraldehyde 3-phosphate: step 1/5. This is Glyceraldehyde-3-phosphate dehydrogenase (GPD) from Podospora anserina (Pleurage anserina).